Here is a 313-residue protein sequence, read N- to C-terminus: Porphobilinogen deaminase (313 aa).

S-(dipyrrolylmethanemethyl)cysteine is present on C241.

This sequence belongs to the HMBS family. As to quaternary structure, monomer. Dipyrromethane serves as cofactor.

The catalysed reaction is 4 porphobilinogen + H2O = hydroxymethylbilane + 4 NH4(+). Its pathway is porphyrin-containing compound metabolism; protoporphyrin-IX biosynthesis; coproporphyrinogen-III from 5-aminolevulinate: step 2/4. It functions in the pathway porphyrin-containing compound metabolism; chlorophyll biosynthesis. In terms of biological role, tetrapolymerization of the monopyrrole PBG into the hydroxymethylbilane pre-uroporphyrinogen in several discrete steps. This Chlorobium phaeobacteroides (strain DSM 266 / SMG 266 / 2430) protein is Porphobilinogen deaminase.